The following is a 553-amino-acid chain: Hydroxylamine reductase (553 aa).

[2Fe-2S] cluster is bound by residues C3, C6, C18, and C25. Residues H252, E276, C320, C408, C436, C461, E495, and K497 each coordinate hybrid [4Fe-2O-2S] cluster. C408 is subject to Cysteine persulfide.

It belongs to the HCP family. [2Fe-2S] cluster is required as a cofactor. Hybrid [4Fe-2O-2S] cluster serves as cofactor.

The protein resides in the cytoplasm. It carries out the reaction A + NH4(+) + H2O = hydroxylamine + AH2 + H(+). In terms of biological role, catalyzes the reduction of hydroxylamine to form NH(3) and H(2)O. The polypeptide is Hydroxylamine reductase (Aliivibrio fischeri (strain MJ11) (Vibrio fischeri)).